A 774-amino-acid polypeptide reads, in one-letter code: Acetyl-CoA decarbonylase/synthase complex subunit alpha (774 aa).

Residues Cys-73, Cys-76, Cys-77, Cys-79, Cys-84, and Cys-94 each contribute to the [4Fe-4S] cluster site. His-117 lines the CO pocket. The [Ni-4Fe-4S] cluster site is built by His-251, Cys-279, and Cys-318. 4Fe-4S ferredoxin-type domains lie at 398–427 (LNEVVELAKQCTECGWCNRNCPNAFKVKEA) and 436–466 (FKGFIDLYKRCYGCGRCEAICPRNLPIVSMT). Cys-408, Cys-411, Cys-414, Cys-418, Cys-446, Cys-449, Cys-452, and Cys-456 together coordinate [4Fe-4S] cluster. [Ni-4Fe-4S] cluster is bound by residues Cys-514, Cys-543, and Cys-578.

The protein belongs to the Ni-containing carbon monoxide dehydrogenase family. Heterotetramer of two alpha and two epsilon subunits. The ACDS complex is made up of alpha, epsilon, beta, gamma and delta subunits with a probable stoichiometry of (alpha(2)epsilon(2))(4)-beta(8)-(gamma(1)delta(1))(8). [4Fe-4S] cluster is required as a cofactor. [Ni-4Fe-4S] cluster serves as cofactor.

It catalyses the reaction CO + 2 oxidized [2Fe-2S]-[ferredoxin] + H2O = 2 reduced [2Fe-2S]-[ferredoxin] + CO2 + 2 H(+). Part of the ACDS complex that catalyzes the reversible cleavage of acetyl-CoA, allowing autotrophic growth from CO(2). The alpha-epsilon subcomponent functions as a carbon monoxide dehydrogenase. The protein is Acetyl-CoA decarbonylase/synthase complex subunit alpha of Methanocaldococcus jannaschii (strain ATCC 43067 / DSM 2661 / JAL-1 / JCM 10045 / NBRC 100440) (Methanococcus jannaschii).